The sequence spans 272 residues: MDNYAVFGNPIKQSKSPFIHTLFAQQTQEKIVYSAIEPATDDFKTALKDFFLEQGKGCNITAPFKEQAYQYAQQLTERAALAGAVNTLKLTDDGIIIGDNTDGAGLVLDLKNNNVTLKGSRILLIGAGGAARGVCGPLLAEHPKELIIANRTFSKAQTLTTIFTKLGNISACEFSELSGEFDLIINSTSASLHGEVPLIGTKLIRPETTIYDMMYSAQVTPFNAWAKEQGAKFILDGLGMLVGQAAESFAIWRGVKPDAKQVLNELRHHLAT.

Shikimate contacts are provided by residues 14-16 (SKS) and Thr61. Lys65 (proton acceptor) is an active-site residue. Glu77 contacts NADP(+). Asn86 and Asp102 together coordinate shikimate. NADP(+)-binding positions include 126-130 (GAGGA), 150-155 (NRTFSK), and Met213. Shikimate is bound at residue Tyr215. Gly237 contacts NADP(+).

Belongs to the shikimate dehydrogenase family. Homodimer.

The enzyme catalyses shikimate + NADP(+) = 3-dehydroshikimate + NADPH + H(+). Its pathway is metabolic intermediate biosynthesis; chorismate biosynthesis; chorismate from D-erythrose 4-phosphate and phosphoenolpyruvate: step 4/7. Functionally, involved in the biosynthesis of the chorismate, which leads to the biosynthesis of aromatic amino acids. Catalyzes the reversible NADPH linked reduction of 3-dehydroshikimate (DHSA) to yield shikimate (SA). The chain is Shikimate dehydrogenase (NADP(+)) from Psychromonas ingrahamii (strain DSM 17664 / CCUG 51855 / 37).